A 199-amino-acid chain; its full sequence is FMN-dependent NADH:quinone oxidoreductase 2 (199 aa).

FMN contacts are provided by residues S10, 16–18 (SVS), and 96–99 (MYNF).

Belongs to the azoreductase type 1 family. Homodimer. FMN serves as cofactor.

The enzyme catalyses 2 a quinone + NADH + H(+) = 2 a 1,4-benzosemiquinone + NAD(+). It catalyses the reaction N,N-dimethyl-1,4-phenylenediamine + anthranilate + 2 NAD(+) = 2-(4-dimethylaminophenyl)diazenylbenzoate + 2 NADH + 2 H(+). Functionally, quinone reductase that provides resistance to thiol-specific stress caused by electrophilic quinones. Its function is as follows. Also exhibits azoreductase activity. Catalyzes the reductive cleavage of the azo bond in aromatic azo compounds to the corresponding amines. The sequence is that of FMN-dependent NADH:quinone oxidoreductase 2 from Pseudomonas fluorescens (strain Pf0-1).